Here is a 137-residue protein sequence, read N- to C-terminus: Hemoglobin subunit alpha-2 (137 aa).

In terms of domain architecture, Globin spans 1 to 137 (DDRSHILAIW…VGGSLTSKYR (137 aa)). His54 provides a ligand contact to O2. Residue His83 coordinates heme b.

Belongs to the globin family. The N-terminus of the mature protein is acetylated. Red blood cells.

The polypeptide is Hemoglobin subunit alpha-2 (Telmatobius peruvianus (Andean frog)).